Reading from the N-terminus, the 559-residue chain is Dihydroxy-acid dehydratase (559 aa).

Cys-52 contacts [2Fe-2S] cluster. Asp-84 provides a ligand contact to Mg(2+). Cys-125 contacts [2Fe-2S] cluster. Mg(2+) is bound by residues Asp-126 and Lys-127. Position 127 is an N6-carboxylysine (Lys-127). Cys-197 is a binding site for [2Fe-2S] cluster. Residue Glu-447 participates in Mg(2+) binding. The active-site Proton acceptor is the Ser-473.

Belongs to the IlvD/Edd family. Homodimer. The cofactor is [2Fe-2S] cluster. It depends on Mg(2+) as a cofactor.

The catalysed reaction is (2R)-2,3-dihydroxy-3-methylbutanoate = 3-methyl-2-oxobutanoate + H2O. It carries out the reaction (2R,3R)-2,3-dihydroxy-3-methylpentanoate = (S)-3-methyl-2-oxopentanoate + H2O. The protein operates within amino-acid biosynthesis; L-isoleucine biosynthesis; L-isoleucine from 2-oxobutanoate: step 3/4. It participates in amino-acid biosynthesis; L-valine biosynthesis; L-valine from pyruvate: step 3/4. In terms of biological role, functions in the biosynthesis of branched-chain amino acids. Catalyzes the dehydration of (2R,3R)-2,3-dihydroxy-3-methylpentanoate (2,3-dihydroxy-3-methylvalerate) into 2-oxo-3-methylpentanoate (2-oxo-3-methylvalerate) and of (2R)-2,3-dihydroxy-3-methylbutanoate (2,3-dihydroxyisovalerate) into 2-oxo-3-methylbutanoate (2-oxoisovalerate), the penultimate precursor to L-isoleucine and L-valine, respectively. The polypeptide is Dihydroxy-acid dehydratase (Roseiflexus sp. (strain RS-1)).